A 198-amino-acid chain; its full sequence is Recombination protein RecR (198 aa).

A C4-type zinc finger spans residues 57–72 (CSICGNLTESDPCAIC). The 96-residue stretch at 80-175 (TTILVVEESK…KVTRLARGLA (96 aa)) folds into the Toprim domain.

This sequence belongs to the RecR family.

May play a role in DNA repair. It seems to be involved in an RecBC-independent recombinational process of DNA repair. It may act with RecF and RecO. This is Recombination protein RecR from Lactococcus lactis subsp. lactis (strain IL1403) (Streptococcus lactis).